The following is a 292-amino-acid chain: Protease HtpX (292 aa).

Transmembrane regions (helical) follow at residues 5-25 (IFLF…VMSV) and 34-54 (SGLL…SLLL). Histidine 140 is a binding site for Zn(2+). Residue glutamate 141 is part of the active site. Histidine 144 lines the Zn(2+) pocket. 2 helical membrane-spanning segments follow: residues 155–175 (LLQG…GGII) and 193–213 (IIVF…AMWF). Glutamate 218 serves as a coordination point for Zn(2+).

It belongs to the peptidase M48B family. It depends on Zn(2+) as a cofactor.

The protein resides in the cell inner membrane. In Xanthomonas oryzae pv. oryzae (strain MAFF 311018), this protein is Protease HtpX.